The following is a 308-amino-acid chain: uncharacterized protein (308 aa).

This is an uncharacterized protein from Methanocaldococcus jannaschii (strain ATCC 43067 / DSM 2661 / JAL-1 / JCM 10045 / NBRC 100440) (Methanococcus jannaschii).